The following is a 135-amino-acid chain: Ribosome-binding factor A (135 aa).

This sequence belongs to the RbfA family. In terms of assembly, monomer. Binds 30S ribosomal subunits, but not 50S ribosomal subunits or 70S ribosomes.

Its subcellular location is the cytoplasm. One of several proteins that assist in the late maturation steps of the functional core of the 30S ribosomal subunit. Associates with free 30S ribosomal subunits (but not with 30S subunits that are part of 70S ribosomes or polysomes). Required for efficient processing of 16S rRNA. May interact with the 5'-terminal helix region of 16S rRNA. The sequence is that of Ribosome-binding factor A from Aliivibrio fischeri (strain ATCC 700601 / ES114) (Vibrio fischeri).